Here is a 315-residue protein sequence, read N- to C-terminus: tRNA dimethylallyltransferase (315 aa).

An ATP-binding site is contributed by 10–17 (GPTASGKS). Position 12 to 17 (12 to 17 (TASGKS)) interacts with substrate. The tract at residues 35–38 (DSMQ) is interaction with substrate tRNA.

Belongs to the IPP transferase family. In terms of assembly, monomer. Requires Mg(2+) as cofactor.

It catalyses the reaction adenosine(37) in tRNA + dimethylallyl diphosphate = N(6)-dimethylallyladenosine(37) in tRNA + diphosphate. Its function is as follows. Catalyzes the transfer of a dimethylallyl group onto the adenine at position 37 in tRNAs that read codons beginning with uridine, leading to the formation of N6-(dimethylallyl)adenosine (i(6)A). This chain is tRNA dimethylallyltransferase, found in Thermoanaerobacter pseudethanolicus (strain ATCC 33223 / 39E) (Clostridium thermohydrosulfuricum).